The primary structure comprises 300 residues: MSSKAEKDIKWGIAPIGWRNDDIPSIGKDNNLQQLLSDIVVAGFQGTEVGGFFPGPEKLNYELKLRNLEIAGQWFSSYIIRDGIEKASEAFEKHCQYLKAINAPVAVVSEQTYTIQRSDTANIFKDKPYFTDKEWDEVCKGLNHYGEIAAKYGLKVAYHHHMGTGIQTKEETDRLMANTDPKLVGLLYDTGHIAVSDGDYMALLNAHIDRVVHVHFKDVRRSKEEECRAKGLTFQGSFLNGMFTVPGDGDLDFKPVYDKLIANNYKGWIVVEAEQDPSKANPLEMAQIAHRYIKQHLIEN.

The protein belongs to the IolE/MocC family. Glutathione serves as cofactor. Co(2+) is required as a cofactor. Requires Mn(2+) as cofactor.

The catalysed reaction is scyllo-inosose = 3D-3,5/4-trihydroxycyclohexane-1,2-dione + H2O. Its pathway is polyol metabolism; myo-inositol degradation into acetyl-CoA; acetyl-CoA from myo-inositol: step 2/7. Its function is as follows. Catalyzes the dehydration of inosose (2-keto-myo-inositol, 2KMI or 2,4,6/3,5-pentahydroxycyclohexanone) to 3D-(3,5/4)-trihydroxycyclohexane-1,2-dione (D-2,3-diketo-4-deoxy-epi-inositol). This chain is Inosose dehydratase, found in Lactiplantibacillus plantarum (strain ATCC BAA-793 / NCIMB 8826 / WCFS1) (Lactobacillus plantarum).